The primary structure comprises 131 residues: (R)-mandelonitrile lyase (131 aa).

One can recognise a Cupin type-2 domain in the interval 42 to 104 (VTFEPGARTA…WHGAAPTTAM (63 aa)). Residues His53, His55, Gln59, His94, and His96 each coordinate Mn(2+).

The protein belongs to the cupin domain-containing hydroxynitrile lyase family. Mn(2+) serves as cofactor.

It catalyses the reaction (R)-mandelonitrile = benzaldehyde + hydrogen cyanide. Its function is as follows. Hydroxynitrile lyase which catalyzes mandelonitrile formation from benzaldehyde and hydrogen cyanide with high stereoselectivity in presence of manganese. The sequence is that of (R)-mandelonitrile lyase from Granulicella tundricola (strain ATCC BAA-1859 / DSM 23138 / MP5ACTX9).